Here is a 160-residue protein sequence, read N- to C-terminus: Transcription antitermination protein NusB (160 aa).

This sequence belongs to the NusB family.

Functionally, involved in transcription antitermination. Required for transcription of ribosomal RNA (rRNA) genes. Binds specifically to the boxA antiterminator sequence of the ribosomal RNA (rrn) operons. This Salinibacter ruber (strain DSM 13855 / M31) protein is Transcription antitermination protein NusB.